Here is a 29-residue protein sequence, read N- to C-terminus: uncharacterized protein (29 aa).

The helical transmembrane segment at 7-27 (FSLVTTIIVLGLIVAVGLTAA) threads the bilayer.

Its subcellular location is the cell inner membrane. This is an uncharacterized protein from Escherichia coli O6:K15:H31 (strain 536 / UPEC).